Here is a 431-residue protein sequence, read N- to C-terminus: Enolase (431 aa).

Residues 27–47 are disordered; the sequence is LESGHSGRAAVPSGASTGSRE. Position 163 (glutamine 163) interacts with (2R)-2-phosphoglycerate. Catalysis depends on glutamate 205, which acts as the Proton donor. Mg(2+)-binding residues include aspartate 242, glutamate 285, and aspartate 312. (2R)-2-phosphoglycerate-binding residues include lysine 337, arginine 366, serine 367, and lysine 388. Catalysis depends on lysine 337, which acts as the Proton acceptor.

Belongs to the enolase family. Mg(2+) serves as cofactor.

It is found in the cytoplasm. It localises to the secreted. The protein resides in the cell surface. It catalyses the reaction (2R)-2-phosphoglycerate = phosphoenolpyruvate + H2O. It functions in the pathway carbohydrate degradation; glycolysis; pyruvate from D-glyceraldehyde 3-phosphate: step 4/5. Functionally, catalyzes the reversible conversion of 2-phosphoglycerate (2-PG) into phosphoenolpyruvate (PEP). It is essential for the degradation of carbohydrates via glycolysis. The protein is Enolase of Oleidesulfovibrio alaskensis (strain ATCC BAA-1058 / DSM 17464 / G20) (Desulfovibrio alaskensis).